A 547-amino-acid chain; its full sequence is Membrane protein insertase YidC (547 aa).

The helical transmembrane segment at 8–28 threads the bilayer; it reads LRLILAIALSFLFIALYSYFF. A compositionally biased stretch (low complexity) spans 37-50; it reads QTTKQETTNNHTAT. The disordered stretch occupies residues 37-62; sequence QTTKQETTNNHTATSPNAPNAQHFST. The segment covering 51–62 has biased composition (polar residues); that stretch reads SPNAPNAQHFST. The next 5 membrane-spanning stretches (helical) occupy residues 325–345, 348–368, 414–434, 449–469, and 495–515; these read VIEY…LDYL, FVGN…IILY, GANP…FFAI, WILW…PLLM, and LLPL…VLYW.

It belongs to the OXA1/ALB3/YidC family. Type 1 subfamily. Interacts with the Sec translocase complex via SecD. Specifically interacts with transmembrane segments of nascent integral membrane proteins during membrane integration.

It localises to the cell inner membrane. In terms of biological role, required for the insertion and/or proper folding and/or complex formation of integral membrane proteins into the membrane. Involved in integration of membrane proteins that insert both dependently and independently of the Sec translocase complex, as well as at least some lipoproteins. Aids folding of multispanning membrane proteins. This Helicobacter pylori (strain ATCC 700392 / 26695) (Campylobacter pylori) protein is Membrane protein insertase YidC.